The sequence spans 93 residues: Small ribosomal subunit protein bS18c (93 aa).

Belongs to the bacterial ribosomal protein bS18 family. As to quaternary structure, part of the 30S ribosomal subunit.

The protein localises to the plastid. It is found in the chloroplast. The chain is Small ribosomal subunit protein bS18c from Pinus koraiensis (Korean pine).